A 166-amino-acid polypeptide reads, in one-letter code: Transcriptional repressor NrdR (166 aa).

The segment at Cys-3–Cys-34 is a zinc-finger region. In terms of domain architecture, ATP-cone spans Leu-49–Asp-139.

Belongs to the NrdR family. It depends on Zn(2+) as a cofactor.

Negatively regulates transcription of bacterial ribonucleotide reductase nrd genes and operons by binding to NrdR-boxes. The protein is Transcriptional repressor NrdR of Methylacidiphilum infernorum (isolate V4) (Methylokorus infernorum (strain V4)).